The primary structure comprises 305 residues: Oxygen-dependent coproporphyrinogen-III oxidase (305 aa).

Ser92 provides a ligand contact to substrate. A divalent metal cation is bound by residues His96 and His106. His106 acts as the Proton donor in catalysis. Position 108–110 (108–110) interacts with substrate; sequence NVR. Positions 145 and 175 each coordinate a divalent metal cation. Positions 239–274 are important for dimerization; sequence YVEFNLLFDRGTLFGLQSGGRAESILISLPPLVRWE. Substrate is bound at residue 257–259; that stretch reads GGR.

The protein belongs to the aerobic coproporphyrinogen-III oxidase family. Homodimer. It depends on a divalent metal cation as a cofactor.

Its subcellular location is the cytoplasm. The catalysed reaction is coproporphyrinogen III + O2 + 2 H(+) = protoporphyrinogen IX + 2 CO2 + 2 H2O. The protein operates within porphyrin-containing compound metabolism; protoporphyrin-IX biosynthesis; protoporphyrinogen-IX from coproporphyrinogen-III (O2 route): step 1/1. Functionally, involved in the heme biosynthesis. Catalyzes the aerobic oxidative decarboxylation of propionate groups of rings A and B of coproporphyrinogen-III to yield the vinyl groups in protoporphyrinogen-IX. The sequence is that of Oxygen-dependent coproporphyrinogen-III oxidase from Xylella fastidiosa (strain 9a5c).